The primary structure comprises 24 residues: Small ribosomal subunit protein uS19c (24 aa).

It belongs to the universal ribosomal protein uS19 family.

Its subcellular location is the plastid. The protein resides in the chloroplast. Functionally, protein S19 forms a complex with S13 that binds strongly to the 16S ribosomal RNA. The sequence is that of Small ribosomal subunit protein uS19c (rps19) from Petunia hybrida (Petunia).